We begin with the raw amino-acid sequence, 638 residues long: Broad-specificity ulvan lyase (638 aa).

An N-terminal signal peptide occupies residues 1–27; sequence MKRRNFIQLSSLATIGMSLPSAGIVNA.

The protein belongs to the polysaccharide lyase 37 family.

It localises to the periplasm. The catalysed reaction is Endolytic cleavage of (1-&gt;4)-beta-galactosaminic bonds between N-acetylgalactosamine and either D-glucuronic acid or L-iduronic acid to produce a mixture of Delta(4)-unsaturated oligosaccharides of different sizes that are ultimately degraded to Delta(4)-unsaturated tetra- and disaccharides.. The enzyme catalyses Elimination of sulfate, appears to act on linkages between N-acetyl-D-glucosamine and uronate. Product is an unsaturated sugar.. Its function is as follows. Broad-specificity lyase involved in ulvan degradation. Ulvan is the main polysaccharide component of the Ulvales (green seaweed) cell wall. It is composed of disaccharide building blocks comprising 3-sulfated rhamnose (Rha3S) linked to D-glucuronic acid (GlcA), L-iduronic acid (IduA), or D-xylose (Xyl). Ulvan lyase catalyzes the endolytic cleavage of the glycosidic bond between Rha3S and the uronic acids GlcA or IduA, producing oligosaccharides that have unsaturated 4-deoxy-L-threo-hex-4-enopyranosiduronic acid (deltaUA) at the non-reducing end. This results eventually in the degradation of the ulvan polysaccharide into deltaUA-Rha3S disaccharides and deltaUA-Rha3S-Xyl-Rha3S tetrasaccharides. It is also able to degrade the glycosaminoglycans heparan sulfate and chondroitin sulfate. Not active against pectin, xanthan or alginate. The polypeptide is Broad-specificity ulvan lyase (Formosa agariphila (strain DSM 15362 / KCTC 12365 / LMG 23005 / KMM 3901 / M-2Alg 35-1)).